The following is a 613-amino-acid chain: pH-response transcription factor pacC/RIM101 (613 aa).

The disordered stretch occupies residues 1–61 (MSPSAPEQKP…SSTAPSTSSD (61 aa)). Low complexity predominate over residues 11–60 (QLQQQQQQQQQGSSSGDSSSGSVNDSKSVTPAPSATSSTSQSSTAPSTSS). C2H2-type zinc fingers lie at residues 64–89 (LICRWNACNQKFPAPEALYEHICERH), 100–124 (LTCQWNSCRTTTVKRDHITSHIRVH), and 130–152 (HKCEFCGKSFKRPQDLKKHVKTH). Positions 146-157 (KKHVKTHADDSV) are enriched in basic and acidic residues. Disordered regions lie at residues 146–186 (KKHV…YDHT), 371–391 (NTPSPPTSHRSPTGMHVGADG), 406–535 (AISS…ATRE), and 565–613 (EFVE…MPGA). Positions 417-441 (PPSSSMSYTSGHSPSPSSSAMSPQS) are enriched in low complexity. 2 stretches are compositionally biased toward polar residues: residues 442-460 (RHGSTASVMYPTLPTSLPA) and 506-517 (SGASTPKASESA). The YPX[LI] motif 1 motif lies at 451–454 (YPTL). The short motif at 605–608 (YPIL) is the YPX[LI] motif 2 element.

This sequence belongs to the pacC/RIM101 family. Binds to DNA. Activated by C-terminal proteolytic cleavage by signaling protease (probably palB/RIM13) at neutral to alkaline ambient pH.

The protein resides in the cytoplasm. It localises to the nucleus. Functionally, transcription factor that mediates regulation of both acid- and alkaline-expressed genes in response to ambient pH. At alkaline ambient pH, activates transcription of alkaline-expressed genes (including PAC1 itself) and represses transcription of acid-expressed genes. The chain is pH-response transcription factor pacC/RIM101 (PAC1) from Gibberella moniliformis (Maize ear and stalk rot fungus).